Here is a 206-residue protein sequence, read N- to C-terminus: Dephospho-CoA kinase (206 aa).

The DPCK domain maps to 4–204 (IVGLTGGIGS…QFYLQQAENK (201 aa)). 12 to 17 (GSGKTT) serves as a coordination point for ATP.

The protein belongs to the CoaE family.

It is found in the cytoplasm. The enzyme catalyses 3'-dephospho-CoA + ATP = ADP + CoA + H(+). It participates in cofactor biosynthesis; coenzyme A biosynthesis; CoA from (R)-pantothenate: step 5/5. Functionally, catalyzes the phosphorylation of the 3'-hydroxyl group of dephosphocoenzyme A to form coenzyme A. This Haemophilus influenzae (strain 86-028NP) protein is Dephospho-CoA kinase.